An 834-amino-acid polypeptide reads, in one-letter code: Unextended protein (834 aa).

Positions 1–20 are cleaved as a signal peptide; the sequence is MNTYFISFITIIIFANGING. Residues 21 to 182 are Extracellular-facing; it reads TSVDTSNKLL…DFLKIKTFEP (162 aa). 3 N-linked (GlcNAc...) asparagine glycosylation sites follow: Asn-38, Asn-42, and Asn-156. Residues 182–361 form the CNNM transmembrane domain; it reads PLIPVWLAII…NDVNDLDKNE (180 aa). A helical transmembrane segment spans residues 183 to 203; the sequence is LIPVWLAIIIIVTCLGFSALF. Residues 204–244 are Cytoplasmic-facing; it reads SGLNLGLMSMDRTELKILRNTGTEKEKKYASKIAPVRDQGN. Residues 245–265 traverse the membrane as a helical segment; it reads YLLCSILLGNVLVNSTFTILL. At 266–267 the chain is on the extracellular side; sequence DG. A helical membrane pass occupies residues 268 to 288; that stretch reads LTSGLFAVIFSTLAIVLFGEI. Topologically, residues 289–298 are cytoplasmic; sequence TPQAVCSRHG. Residues 299-319 traverse the membrane as a helical segment; the sequence is LAIGAKTILVTKTVMAITAPL. Residues 320–834 are Extracellular-facing; it reads SYPVSRILDK…DKFESKQSKP (515 aa). 2 consecutive CBS domains span residues 380-441 and 448-515; these read MTHI…NTPL and YQNP…IVDE. N-linked (GlcNAc...) asparagine glycosylation is present at Asn-522. A nucleoside 3',5'-cyclic phosphate is bound at residue 604–656; the sequence is YIFTQGKAVDFFVLILEGRVEVTIGKEALMFESGPFTYFGTQALVPNVVIDSP. A disordered region spans residues 739–765; it reads CFAQNQSTRRLSNRSINSSPTNMNRSP. The segment covering 740–763 has biased composition (polar residues); sequence FAQNQSTRRLSNRSINSSPTNMNR. N-linked (GlcNAc...) asparagine glycosylation is found at Asn-743, Asn-751, and Asn-790. Positions 807–834 are disordered; sequence SGEQDTTAASMPLLPKLDDKFESKQSKP. A compositionally biased stretch (basic and acidic residues) spans 822-834; sequence KLDDKFESKQSKP.

It belongs to the ACDP family. As to quaternary structure, interacts with PRL-1, possibly at the plasma membrane.

Its subcellular location is the cell membrane. Its function is as follows. Probable metal transporter. Acts downstream of PRL-1 and protects the nervous system against olfactory carbon dioxide stimulation. The protein is Unextended protein of Drosophila melanogaster (Fruit fly).